We begin with the raw amino-acid sequence, 506 residues long: 2-isopropylmalate synthase (506 aa).

The Pyruvate carboxyltransferase domain maps to 4–266 (ILFMDTTLRD…EPSMTLKEIK (263 aa)). Mn(2+) is bound by residues D13, H201, H203, and N237. The regulatory domain stretch occupies residues 390–506 (NITQLQVHFV…KLKSFIQLVK (117 aa)).

This sequence belongs to the alpha-IPM synthase/homocitrate synthase family. LeuA type 1 subfamily. Homodimer. It depends on Mn(2+) as a cofactor.

It localises to the cytoplasm. The enzyme catalyses 3-methyl-2-oxobutanoate + acetyl-CoA + H2O = (2S)-2-isopropylmalate + CoA + H(+). It functions in the pathway amino-acid biosynthesis; L-leucine biosynthesis; L-leucine from 3-methyl-2-oxobutanoate: step 1/4. In terms of biological role, catalyzes the condensation of the acetyl group of acetyl-CoA with 3-methyl-2-oxobutanoate (2-ketoisovalerate) to form 3-carboxy-3-hydroxy-4-methylpentanoate (2-isopropylmalate). In Bacillus cereus (strain AH820), this protein is 2-isopropylmalate synthase.